The primary structure comprises 374 residues: Pectate lyase 1 (374 aa).

Positions 1–22 (MKYLLPSAAAGLLLLAAQPTMA) are cleaved as a signal peptide. An intrachain disulfide couples Cys93 to Cys176. 4 residues coordinate Ca(2+): Asp150, Asp152, Glu187, and Asp191. Residue Arg239 is part of the active site. A disulfide bridge links Cys350 with Cys373.

It belongs to the polysaccharide lyase 1 family. PLADES subfamily. The cofactor is Ca(2+).

The protein resides in the secreted. The enzyme catalyses Eliminative cleavage of (1-&gt;4)-alpha-D-galacturonan to give oligosaccharides with 4-deoxy-alpha-D-galact-4-enuronosyl groups at their non-reducing ends.. The protein operates within glycan metabolism; pectin degradation; 2-dehydro-3-deoxy-D-gluconate from pectin: step 2/5. In terms of biological role, involved in maceration and soft-rotting of plant tissue. The protein is Pectate lyase 1 (pel1) of Pectobacterium carotovorum (Erwinia carotovora).